We begin with the raw amino-acid sequence, 148 residues long: SPbeta prophage-derived uncharacterized protein YomK (148 aa).

2 consecutive transmembrane segments (helical) span residues 72–92 (WGIGSLILGTSFIGFQVLFGV) and 104–124 (NALIYVLITIIICLWTLRNII).

It localises to the cell membrane. In Bacillus subtilis (strain 168), this protein is SPbeta prophage-derived uncharacterized protein YomK (yomK).